A 904-amino-acid chain; its full sequence is MSRPLPYHIHFFSGLLTCWILCTSSAHKCTVRHEVADCSHLKLTQIPDDLPTNITVLNLTHNQLRRLPPANFTRYSQLTTLDGGFNSISKLEPELCQSLPWLEILNLQHNEISQLSDKTFIFCMNLTELHLMSNSIQKIKNDPFKNLKNLIKLDLSHNGLSSTKLGTQLQLENLQELLLSNNKISSLTPGEFDFLGNSSLKRLELSSNQIKEFSPGCFHTLGELSGLSLNNAKLSPSLTEKLCLELSNTSIENLSLSSNQLDTISHTTFDGLKQTNLTTLDLSRNSLRVMGNDSFAWLPHLEYLSLEYNNIEHLSSRSFYGLSNLRRLDLRRSFTRQSISLTSLPKIDDFSFQWLKCLEYLNMDDNNFPGIKRNTFTGLVRLKFLSLSNSFSSLRTLTNETFLSLAGCPLLLLDLTKNKISKIQSGAFSWLGHLEVLDLGLNEIGQELTGQEWRGLDNIVEIYLSYNKYLELTTNSFTSVPSLQRLMLRRVALKNVDCSPSPFRPLPNLVILDLSNNNIANINDELLKGLEKLEILDLQHNNLARLWKHANPGGPVQFLKGLFHLHILNLGSNGFDEIPVEAFKDLRELKSIDLGMNNLNILPQSVFDNQVSLKSLSLQKNLITSVQKTVFGPAFRNLSYLDMRFNPFDCTCESIAWFVNWINITHTNISELSNHYLCNTPPQYHGYPVMLFDVSPCKDSAPFELLFMININILLIFIFIVLLIHFEGWRISFYWNVSVHRVLGFKEIDRAEQFEYAAYIIHAYKDRDWVWKHSSPMEDEDHTLRFCLEERDFEAGVLELEAIVNSIRRSRKIIFVVTQNLLKDPLCKRFKVHHAVQQAIEQNLDSIILIFLEEIPDYKLNHALCLRRGMFKSHCILNWPVQKERVNAFHHKLKVALGSRNSAH.

Residues 1 to 26 (MSRPLPYHIHFFSGLLTCWILCTSSA) form the signal peptide. The region spanning 27–52 (HKCTVRHEVADCSHLKLTQIPDDLPT) is the LRRNT domain. Residues 27 to 705 (HKCTVRHEVA…PCKDSAPFEL (679 aa)) are Lumenal-facing. Residues Cys29 and Cys38 are joined by a disulfide bond. Asn53, Asn58, and Asn71 each carry an N-linked (GlcNAc...) asparagine glycan. LRR repeat units follow at residues 53 to 74 (NITV…NFTR), 77 to 98 (QLTT…LCQS), 101 to 122 (WLEI…TFIF), 125 to 146 (NLTE…PFKN), 149 to 170 (NLIK…TQLQ), and 173 to 194 (NLQE…EFDF). An intrachain disulfide couples Cys96 to Cys123. A glycan (N-linked (GlcNAc...) asparagine) is linked at Asn125. The N-linked (GlcNAc...) asparagine glycan is linked to Asn197. LRR repeat units lie at residues 199–220 (SLKR…CFHT) and 223–245 (ELSG…LCLE). N-linked (GlcNAc...) asparagine glycosylation is found at Asn248, Asn253, Asn276, and Asn292. 14 LRR repeats span residues 250–271 (SIEN…TFDG), 276–297 (NLTT…SFAW), 300–321 (HLEY…SFYG), 324–345 (NLRR…TSLP), 357–378 (CLEY…TFTG), 381–401 (RLKF…TNET), 409–430 (PLLL…AFSW), 433–455 (HLEV…EWRG), 466–487 (YNKY…QRLM), 508–529 (NLVI…LLKG), 532–553 (KLEI…ANPG), 564–585 (HLHI…AFKD), 588–609 (ELKS…VFDN), and 612–633 (SLKS…VFGP). An N-linked (GlcNAc...) asparagine glycan is attached at Asn399. 3 N-linked (GlcNAc...) asparagine glycosylation sites follow: Asn637, Asn663, and Asn668. Residues 646–699 (NPFDCTCESIAWFVNWINITHTNISELSNHYLCNTPPQYHGYPVMLFDVSPCKD) enclose the LRRCT domain. 2 disulfide bridges follow: Cys650/Cys678 and Cys652/Cys697. The chain crosses the membrane as a helical span at residues 706 to 726 (LFMININILLIFIFIVLLIHF). Topologically, residues 727-904 (EGWRISFYWN…VALGSRNSAH (178 aa)) are cytoplasmic. Residues 754-897 (FEYAAYIIHA…AFHHKLKVAL (144 aa)) form the TIR domain. At Tyr759 the chain carries Phosphotyrosine. Glycyl lysine isopeptide (Lys-Gly) (interchain with G-Cter in ubiquitin) cross-links involve residues Lys765, Lys812, and Lys831. Tyr858 carries the phosphotyrosine modification.

Belongs to the Toll-like receptor family. Monomer and homodimer; dimerization is triggered by ligand-binding, the signaling unit is composed of one ds-RNA of around 40 bp and two TLR3 molecules, and lateral clustering of signaling units along the length of the ds-RNA ligand is required for TLR3 signal transduction. Interacts (via transmembrane domain) with UNC93B1; the interaction is required for transport from the ER to the endosomes. Interacts with TICAM1 (via the TIR domain) in response to poly(I:C) and this interaction is enhanced in the presence of WDFY1. Interacts with SRC; upon binding of double-stranded RNA. The tyrosine-phosphorylated form (via TIR domain) interacts with WDFY1 (via WD repeat 2) in response to poly(I:C). TLR3 signaling requires a proteolytic cleavage mediated by cathepsins CTSB and CTSH, the cleavage occurs between amino acids 252 and 346. The cleaved form of TLR3 is the predominant form found in endosomes. Post-translationally, ubiquitinated by TRIM3; leading to recognition and sorting of polyubiquitinated TLR3 by the ESCRT complexes. Ubiquitinated by ZNRF1 via 'Lys-63'-linked ubiquitin chains; leading to TLR3 lysosomal trafficking and degradation. Ubiquitinated by RNF170 at Lys-765 via 'Lys-48'-linked ubiquitin chains; leading to TLR3 proteasomal degradation.

The protein localises to the endoplasmic reticulum membrane. It localises to the endosome membrane. Its subcellular location is the early endosome. Its function is as follows. Key component of innate and adaptive immunity. TLRs (Toll-like receptors) control host immune response against pathogens through recognition of molecular patterns specific to microorganisms. TLR3 is a nucleotide-sensing TLR which is activated by double-stranded RNA, a sign of viral infection. Acts via the adapter TRIF/TICAM1, leading to NF-kappa-B activation, IRF3 nuclear translocation, cytokine secretion and the inflammatory response. The chain is Toll-like receptor 3 (TLR3) from Bos taurus (Bovine).